The chain runs to 238 residues: MEWRDEGALLSVRRHGESSAIIEVFTAAHGRHAGVVRGGASRKIAPILQPGAQLDLTWKARLDEHMGAFTVEPLRSRTALLGDRLGLAGLNAICAMLHVTLPEREPHSTLWQESMVLLDALDRPGWPPAYLRWEMRLLEETGFGLDLTRCAVTGSREDLAFVSPKTGRAVSSGAAGGWADRLFPLPLALLGQGPASAEEVRQGLAITGHFLGRELAPLLNGRPLPEARARLMELLARA.

It belongs to the RecO family.

Involved in DNA repair and RecF pathway recombination. The chain is DNA repair protein RecO from Cereibacter sphaeroides (strain ATCC 17023 / DSM 158 / JCM 6121 / CCUG 31486 / LMG 2827 / NBRC 12203 / NCIMB 8253 / ATH 2.4.1.) (Rhodobacter sphaeroides).